We begin with the raw amino-acid sequence, 436 residues long: Histidinol dehydrogenase (436 aa).

NAD(+) is bound by residues tyrosine 136, glutamine 198, and asparagine 221. Substrate is bound by residues serine 244, glutamine 266, and histidine 269. Residues glutamine 266 and histidine 269 each contribute to the Zn(2+) site. Catalysis depends on proton acceptor residues glutamate 334 and histidine 335. Substrate is bound by residues histidine 335, aspartate 368, glutamate 422, and histidine 427. Aspartate 368 contacts Zn(2+). Histidine 427 contacts Zn(2+).

It belongs to the histidinol dehydrogenase family. It depends on Zn(2+) as a cofactor.

The catalysed reaction is L-histidinol + 2 NAD(+) + H2O = L-histidine + 2 NADH + 3 H(+). It functions in the pathway amino-acid biosynthesis; L-histidine biosynthesis; L-histidine from 5-phospho-alpha-D-ribose 1-diphosphate: step 9/9. Functionally, catalyzes the sequential NAD-dependent oxidations of L-histidinol to L-histidinaldehyde and then to L-histidine. This chain is Histidinol dehydrogenase, found in Dehalococcoides mccartyi (strain ATCC BAA-2266 / KCTC 15142 / 195) (Dehalococcoides ethenogenes (strain 195)).